Reading from the N-terminus, the 172-residue chain is Interferon tau-3 (172 aa).

2 disulfides stabilise this stretch: cysteine 1–cysteine 99 and cysteine 29–cysteine 139. Asparagine 78 is a glycosylation site (N-linked (GlcNAc...) asparagine).

Belongs to the alpha/beta interferon family. IFN-alphaII subfamily. In terms of tissue distribution, constitutively and exclusively expressed in the mononuclear cells of the extraembryonic trophectoderm.

The protein localises to the secreted. Paracrine hormone primarily responsible for maternal recognition of pregnancy. Interacts with endometrial receptors, probably type I interferon receptors, and blocks estrogen receptor expression, preventing the estrogen-induced increase in oxytocin receptor expression in the endometrium. This results in the suppression of the pulsatile endometrial release of the luteolytic hormone prostaglandin F2-alpha, hindering the regression of the corpus luteum (luteolysis) and therefore a return to ovarian cyclicity. This, and a possible direct effect of IFN-tau on prostaglandin synthesis, leads in turn to continued ovarian progesterone secretion, which stimulates the secretion by the endometrium of the nutrients required for the growth of the conceptus. In summary, displays particularly high antiviral and antiproliferative potency concurrently with particular weak cytotoxicity, high antiluteolytic activity and immunomodulatory properties. In contrast with other IFNs, IFN-tau is not virally inducible. The chain is Interferon tau-3 (IFNT3) from Bos taurus (Bovine).